The chain runs to 393 residues: Neuroplastin (393 aa).

A signal peptide spans 1-28; sequence MSGSSLPGALALSLLLVSGSLLPGPGAA. 3 Ig-like domains span residues 29-134, 148-234, and 237-327; these read QNAG…PSIT, PRIV…IEVK, and PDIT…ASVS. The Extracellular segment spans residues 29 to 338; the sequence is QNAGFVKSPM…VLRVRSHLAP (310 aa). A disulfide bridge connects residues cysteine 52 and cysteine 116. The tract at residues 149–161 is narpin; mediates binding with FGFR1 and has antidepressant-like activity; the sequence is RIVTSEEVIIRDS. A disulfide bridge connects residues cysteine 169 and cysteine 217. N-linked (GlcNAc...) asparagine glycans are attached at residues asparagine 170, asparagine 196, asparagine 228, asparagine 283, asparagine 295, and asparagine 316. A disulfide bridge links cysteine 258 with cysteine 315. A helical transmembrane segment spans residues 339–359; the sequence is LWPFLGILAEIIILVVIIVVY. At 360 to 393 the chain is on the cytoplasmic side; that stretch reads EKRKRPDEVPDAGPMKTNSTNNHKDKNLRQRNTN. Positions 366–393 are disordered; that stretch reads DEVPDAGPMKTNSTNNHKDKNLRQRNTN.

As to quaternary structure, interacts with ATP2B1; this interaction stabilizes ATP2B1 and increases ATPase activity; this interaction controls T cell calcium homeostasis following T cell activation. Interacts with XKR8; promoting its localization at the cell membrane. In terms of processing, isoform 1 and isoform 2 are N-glycosylated. Isoform 1 is ubiquitously expressed. Isoform 2 is brain-specific. In brain isoform 2 is highly expressed in hippocampus and cerebral cortex and weakly in cerebellum and lower brain regions. In the hippocampus isoform 2 is found in the dentate gyrus and CA1-CA4, the striatum oriens of CA3 shows the higher level.

The protein resides in the cell membrane. Its subcellular location is the postsynaptic density. Its function is as follows. Probable homophilic and heterophilic cell adhesion molecule involved in long term potentiation at hippocampal excitatory synapses through activation of p38MAPK. May also regulate neurite outgrowth by activating the FGFR1 signaling pathway. May play a role in synaptic plasticity. Also acts as a chaperone for ATP2B1; stabilizes ATP2B1 and increases its ATPase activity. Promotes localization of XKR8 at the cell membrane. The protein is Neuroplastin (Nptn) of Rattus norvegicus (Rat).